Reading from the N-terminus, the 553-residue chain is Dihydroxy-acid dehydratase (553 aa).

Residue aspartate 78 coordinates Mg(2+). Residue cysteine 119 coordinates [2Fe-2S] cluster. Aspartate 120 and lysine 121 together coordinate Mg(2+). N6-carboxylysine is present on lysine 121. Cysteine 191 provides a ligand contact to [2Fe-2S] cluster. Residue glutamate 444 coordinates Mg(2+). Residue serine 470 is the Proton acceptor of the active site.

Belongs to the IlvD/Edd family. In terms of assembly, homodimer. The cofactor is [2Fe-2S] cluster. Mg(2+) is required as a cofactor.

It carries out the reaction (2R)-2,3-dihydroxy-3-methylbutanoate = 3-methyl-2-oxobutanoate + H2O. The enzyme catalyses (2R,3R)-2,3-dihydroxy-3-methylpentanoate = (S)-3-methyl-2-oxopentanoate + H2O. Its pathway is amino-acid biosynthesis; L-isoleucine biosynthesis; L-isoleucine from 2-oxobutanoate: step 3/4. It functions in the pathway amino-acid biosynthesis; L-valine biosynthesis; L-valine from pyruvate: step 3/4. Its function is as follows. Functions in the biosynthesis of branched-chain amino acids. Catalyzes the dehydration of (2R,3R)-2,3-dihydroxy-3-methylpentanoate (2,3-dihydroxy-3-methylvalerate) into 2-oxo-3-methylpentanoate (2-oxo-3-methylvalerate) and of (2R)-2,3-dihydroxy-3-methylbutanoate (2,3-dihydroxyisovalerate) into 2-oxo-3-methylbutanoate (2-oxoisovalerate), the penultimate precursor to L-isoleucine and L-valine, respectively. This chain is Dihydroxy-acid dehydratase, found in Methanococcoides burtonii (strain DSM 6242 / NBRC 107633 / OCM 468 / ACE-M).